The primary structure comprises 355 residues: Uroporphyrinogen decarboxylase (355 aa).

Substrate contacts are provided by residues 36–40, Asp85, Tyr160, Ser215, and His334; that span reads RQAGR.

It belongs to the uroporphyrinogen decarboxylase family. As to quaternary structure, homodimer.

It is found in the cytoplasm. The catalysed reaction is uroporphyrinogen III + 4 H(+) = coproporphyrinogen III + 4 CO2. It functions in the pathway porphyrin-containing compound metabolism; protoporphyrin-IX biosynthesis; coproporphyrinogen-III from 5-aminolevulinate: step 4/4. Catalyzes the decarboxylation of four acetate groups of uroporphyrinogen-III to yield coproporphyrinogen-III. This Rhodococcus jostii (strain RHA1) protein is Uroporphyrinogen decarboxylase.